The primary structure comprises 118 residues: Holo-[acyl-carrier-protein] synthase (118 aa).

2 residues coordinate Mg(2+): Asp-5 and Glu-51.

The protein belongs to the P-Pant transferase superfamily. AcpS family. It depends on Mg(2+) as a cofactor.

It is found in the cytoplasm. It catalyses the reaction apo-[ACP] + CoA = holo-[ACP] + adenosine 3',5'-bisphosphate + H(+). Transfers the 4'-phosphopantetheine moiety from coenzyme A to a Ser of acyl-carrier-protein. This chain is Holo-[acyl-carrier-protein] synthase, found in Helicobacter pylori (strain P12).